A 22-amino-acid polypeptide reads, in one-letter code: VVSQYHELVVQARLSEQELEFR.

This sequence belongs to the MICOS complex subunit Mic60 family. Component of the mitochondrial contact site and cristae organizing system (MICOS) complex, composed of at least MICOS10/MIC10, CHCHD3/MIC19, CHCHD6/MIC25, APOOL/MIC27, IMMT/MIC60, APOO/MIC23/MIC26 and MICOS13/MIC13. This complex was also known under the names MINOS or MitOS complex. The MICOS complex associates with mitochondrial outer membrane proteins SAMM50, MTX1 and MTX2 (together described as components of the mitochondrial outer membrane sorting assembly machinery (SAM) complex) and DNAJC11, mitochondrial inner membrane protein TMEM11 and with HSPA9. The MICOS and SAM complexes together with DNAJC11 are part of a large protein complex spanning both membranes termed the mitochondrial intermembrane space bridging (MIB) complex. Interacts with HSPA1A/HSPA1B and OPA1, preferentially with the soluble OPA1 form. Interacts with MICOS13/MIC13, MICOS10/MIC10, CHCHD3/MIC19, CHCHD6/MIC25, SAMM50 and TMEM11. Interacts with APOO/MIC23/MIC26 and APOOL/MIC27. Interacts with ARMC1. Interacts with ARMC12.

It is found in the mitochondrion inner membrane. It localises to the mitochondrion. In terms of biological role, component of the MICOS complex, a large protein complex of the mitochondrial inner membrane that plays crucial roles in the maintenance of crista junctions, inner membrane architecture, and formation of contact sites to the outer membrane. Plays an important role in the maintenance of the MICOS complex stability and the mitochondrial cristae morphology. The polypeptide is MICOS complex subunit MIC60 (Mesocricetus auratus (Golden hamster)).